A 465-amino-acid polypeptide reads, in one-letter code: E3 ubiquitin-protein ligase TRIM15 (465 aa).

An RING-type zinc finger spans residues C16–Q61. The B box-type zinc-finger motif lies at L78–L119. Residues C83, H86, C105, and H111 each contribute to the Zn(2+) site. Residues Y126–Q229 adopt a coiled-coil conformation. The 190-residue stretch at E276–G465 folds into the B30.2/SPRY domain.

Belongs to the TRIM/RBCC family. Interacts with paxillin/PXN; this interaction recruits TRIM15 to focal adhesions. Interacts with TRIM8; this interaction prevents TRIM8 cytoplasmic translocation.

The protein localises to the cytoplasm. Its subcellular location is the nucleus. It localises to the cell junction. It is found in the focal adhesion. It catalyses the reaction S-ubiquitinyl-[E2 ubiquitin-conjugating enzyme]-L-cysteine + [acceptor protein]-L-lysine = [E2 ubiquitin-conjugating enzyme]-L-cysteine + N(6)-ubiquitinyl-[acceptor protein]-L-lysine.. In terms of biological role, E3 ubiquitin ligase that plays a role in several processes including innate antiviral immnity, cell migration and chemotaxis. Acts as a 'Lys-63'-specific ubiquitin ligase for MAPK1/ERK2 and MAPK3/ERK1, promoting their activation by facilitating their interaction with MAP2K1 and MAP2K2. Also plays a role in cell migration and chemotaxis by acting as a stable focal adhesion component upon recruitment by multi-adapter protein paxillin/PXN. Functions in the RIGI-mediated interferon induction pathway upstream or at the level of MAVS. Inhibits NF-kappa-B activation by turnover of 'Lys-63'-linked ubiquitination of MAP3K7/TAK1. Mechanistically, prevents TRIM8 cytoplasmic translocation and thus inhibits TRIM8-mediated 'Lys-63'-linked polyubiquitination of MAP3K7/TAK1 in the cytoplasm. Also has an important regulatory effect on the activation of hepatic stellate cells (HSCs). The chain is E3 ubiquitin-protein ligase TRIM15 (TRIM15) from Macaca mulatta (Rhesus macaque).